The primary structure comprises 209 residues: Thymidine kinase (209 aa).

ATP-binding positions include 16-23 and 90-93; these read GPMFAGKT and DEAQ. The active-site Proton acceptor is the glutamate 91.

Belongs to the thymidine kinase family. Homotetramer.

Its subcellular location is the cytoplasm. It carries out the reaction thymidine + ATP = dTMP + ADP + H(+). This is Thymidine kinase from Onion yellows phytoplasma (strain OY-M).